The sequence spans 404 residues: Arginine biosynthesis bifunctional protein ArgJ (404 aa).

6 residues coordinate substrate: Thr166, Lys189, Thr200, Glu280, Asn399, and Ser404. The active-site Nucleophile is the Thr200.

This sequence belongs to the ArgJ family. As to quaternary structure, heterotetramer of two alpha and two beta chains.

Its subcellular location is the cytoplasm. The enzyme catalyses N(2)-acetyl-L-ornithine + L-glutamate = N-acetyl-L-glutamate + L-ornithine. It carries out the reaction L-glutamate + acetyl-CoA = N-acetyl-L-glutamate + CoA + H(+). It functions in the pathway amino-acid biosynthesis; L-arginine biosynthesis; L-ornithine and N-acetyl-L-glutamate from L-glutamate and N(2)-acetyl-L-ornithine (cyclic): step 1/1. Its pathway is amino-acid biosynthesis; L-arginine biosynthesis; N(2)-acetyl-L-ornithine from L-glutamate: step 1/4. Functionally, catalyzes two activities which are involved in the cyclic version of arginine biosynthesis: the synthesis of N-acetylglutamate from glutamate and acetyl-CoA as the acetyl donor, and of ornithine by transacetylation between N(2)-acetylornithine and glutamate. The chain is Arginine biosynthesis bifunctional protein ArgJ from Mycobacterium bovis (strain ATCC BAA-935 / AF2122/97).